A 228-amino-acid chain; its full sequence is Triosephosphate isomerase (228 aa).

Substrate is bound at residue 9–11 (NFK). Histidine 93 functions as the Electrophile in the catalytic mechanism. Glutamate 141 (proton acceptor) is an active-site residue. Substrate is bound by residues isoleucine 146, glycine 180, and 201-202 (AS).

The protein belongs to the triosephosphate isomerase family. As to quaternary structure, homotetramer; dimer of dimers.

It is found in the cytoplasm. The enzyme catalyses D-glyceraldehyde 3-phosphate = dihydroxyacetone phosphate. Its pathway is carbohydrate biosynthesis; gluconeogenesis. It participates in carbohydrate degradation; glycolysis; D-glyceraldehyde 3-phosphate from glycerone phosphate: step 1/1. Functionally, involved in the gluconeogenesis. Catalyzes stereospecifically the conversion of dihydroxyacetone phosphate (DHAP) to D-glyceraldehyde-3-phosphate (G3P). The chain is Triosephosphate isomerase from Metallosphaera sedula (strain ATCC 51363 / DSM 5348 / JCM 9185 / NBRC 15509 / TH2).